Here is a 336-residue protein sequence, read N- to C-terminus: MIEADRLISAGTTLPEDGADRAIRPKLLEEYVGQPQVRSQMEIFIKAAKLRGDALDHLLIFGPPGLGKTTLANIVANEMGVNLRTTSGPVLEKAGDLAAMLTNLEPHDVLFIDEIHRLSPVVEEVLYPAMEDYQLDIMIGEGPAARSIKIDLPPFTLIGATTRAGSLTSPLRDRFGIVQRLEFYQVPDLQYIVSRSARFMGLEMSDDGALEVARRARGTPRIANRLLRRVRDFAEVKHDGTISADIAAQALDMLNVDAEGFDYMDRKLLLAVIDKFFGGPVGLDNLAAAIGEERETIEDVLEPYLIQQGFLQRTPRGRMATTRAWNHFGITPPEMP.

A large ATPase domain (RuvB-L) region spans residues 4–184 (ADRLISAGTT…FGIVQRLEFY (181 aa)). Residues isoleucine 23, arginine 24, glycine 65, lysine 68, threonine 69, threonine 70, 131–133 (EDY), arginine 174, tyrosine 184, and arginine 221 contribute to the ATP site. Threonine 69 serves as a coordination point for Mg(2+). Positions 185-255 (QVPDLQYIVS…IAAQALDMLN (71 aa)) are small ATPAse domain (RuvB-S). A head domain (RuvB-H) region spans residues 258–336 (AEGFDYMDRK…HFGITPPEMP (79 aa)). The DNA site is built by arginine 294, arginine 313, and arginine 318.

This sequence belongs to the RuvB family. In terms of assembly, homohexamer. Forms an RuvA(8)-RuvB(12)-Holliday junction (HJ) complex. HJ DNA is sandwiched between 2 RuvA tetramers; dsDNA enters through RuvA and exits via RuvB. An RuvB hexamer assembles on each DNA strand where it exits the tetramer. Each RuvB hexamer is contacted by two RuvA subunits (via domain III) on 2 adjacent RuvB subunits; this complex drives branch migration. In the full resolvosome a probable DNA-RuvA(4)-RuvB(12)-RuvC(2) complex forms which resolves the HJ.

Its subcellular location is the cytoplasm. The enzyme catalyses ATP + H2O = ADP + phosphate + H(+). Its function is as follows. The RuvA-RuvB-RuvC complex processes Holliday junction (HJ) DNA during genetic recombination and DNA repair, while the RuvA-RuvB complex plays an important role in the rescue of blocked DNA replication forks via replication fork reversal (RFR). RuvA specifically binds to HJ cruciform DNA, conferring on it an open structure. The RuvB hexamer acts as an ATP-dependent pump, pulling dsDNA into and through the RuvAB complex. RuvB forms 2 homohexamers on either side of HJ DNA bound by 1 or 2 RuvA tetramers; 4 subunits per hexamer contact DNA at a time. Coordinated motions by a converter formed by DNA-disengaged RuvB subunits stimulates ATP hydrolysis and nucleotide exchange. Immobilization of the converter enables RuvB to convert the ATP-contained energy into a lever motion, pulling 2 nucleotides of DNA out of the RuvA tetramer per ATP hydrolyzed, thus driving DNA branch migration. The RuvB motors rotate together with the DNA substrate, which together with the progressing nucleotide cycle form the mechanistic basis for DNA recombination by continuous HJ branch migration. Branch migration allows RuvC to scan DNA until it finds its consensus sequence, where it cleaves and resolves cruciform DNA. This is Holliday junction branch migration complex subunit RuvB from Shigella sonnei (strain Ss046).